The sequence spans 619 residues: Vitamin B12 transporter BtuB (619 aa).

Positions 1-25 (MINKKRLLLSTVSIMVISGWNQASA) are cleaved as a signal peptide. Residues 31–38 (DSLVVTAS) carry the TonB box motif. The 115-residue stretch at 43–157 (PISSILAPYT…IGGVINIITT (115 aa)) folds into the TBDR plug domain. Cyanocob(III)alamin contacts are provided by residues leucine 88, serine 90, and 115–116 (IS). A TBDR beta-barrel domain is found at 160 to 619 (KLGTSLNVGI…EYYLTGSYNF (460 aa)). The next 3 membrane-spanning stretches (beta stranded) occupy residues 163-170 (TSLNVGIG), 174-183 (YQTYDGATQQ), and 189-200 (TVLTAAANYTYT). The Ca(2+) site is built by aspartate 204, glutamine 216, aspartate 218, and aspartate 220. Beta stranded transmembrane passes span 222 to 232 (FMSKMLWLGVD) and 237 to 253 (EQVS…NRTS). Ca(2+)-binding residues include tyrosine 254 and aspartate 255. Cyanocob(III)alamin is bound at residue alanine 256. Aspartate 268 is a Ca(2+) binding site. The next 17 beta stranded transmembrane spans lie at 270 to 284 (RELY…VRFN), 286 to 303 (GIYS…KDYN), 316 to 332 (SLND…NTFQ), 335 to 344 (QGIVSTGVDF), 360 to 376 (KTVR…QQLK), 378 to 388 (FILEGAIRSDK), 392 to 407 (AGWN…WEFI), 410 to 424 (YRLI…KAPT), 441 to 450 (ESKQWEGGIE), 456 to 465 (LTWRMTVYRN), 478 to 495 (YYNI…TGLI), 499 to 514 (MFQH…PRNS), 522 to 534 (RRAK…QLDW), 540 to 556 (DWGL…DKDF), 563 to 577 (RVKL…LTVS), 590 to 601 (IANLLDKDYETV), and 607 to 619 (PGRE…SYNF). Serine 316 contacts cyanocob(III)alamin. Position 522 (arginine 522) interacts with cyanocob(III)alamin. The short motif at 602 to 619 (YGYRIPGREYYLTGSYNF) is the TonB C-terminal box element.

This sequence belongs to the TonB-dependent receptor family. BtuB (TC 1.B.14.3.1) subfamily.

Its subcellular location is the cell outer membrane. In terms of biological role, involved in the active translocation of vitamin B12 (cyanocobalamin) across the outer membrane to the periplasmic space. It derives its energy for transport by interacting with the trans-periplasmic membrane protein TonB. The polypeptide is Vitamin B12 transporter BtuB (Photorhabdus laumondii subsp. laumondii (strain DSM 15139 / CIP 105565 / TT01) (Photorhabdus luminescens subsp. laumondii)).